A 550-amino-acid polypeptide reads, in one-letter code: MRNSASSNKNNNKGQNDFAEMEYMNITVVTSNEPYGLFDSSNPFFYKRRTPKFNLTLGGVHSGHVQRGLRDPICISTSGKGNCRDGYTKETSGPDSVRVLVATRAKPSKNLNSELDREFYDHFLEVLNRPEETGRFHFSTQFLYYREELFIAELNNSRLGGKPVVFDMDMSAGDFLSLFYLLKVPVEIIDLKAVIVSPTGWANTATIDVVYDLLHMMGRDDIPVGLGDMFAINQSEPVFPSAGDCKYAKAVPQGCGGFLDSDTLYGLARDLPRSPRRYENSVAHGAPSDTDRPELRQPLALEVWQNLTKSVDEVSKITVLTNGPLTSLAKIISSDKNSSSIIKEVYIVGGHISRGKSDKGNIFTVPSNSYAEFNMFLDPLAAKTVLESGLNITLIPLATQREFSFQAMLNRLYSSTKTPEARFVKRLLTRLQALHQKQRRYMHMDMFLGEILGAIFLGGDHALLKPKMRTEYIKVIAEGDESKDGHILIDKLRGKQIKILERVDLRGCYESFASRLDDKKQSAVIGSFEEQRMKWNTPPSYKPITARIFH.

The protein belongs to the IUNH family.

The protein localises to the cytoplasm. In terms of biological role, may be involved in the degradation of nucleosides. The polypeptide is Nucleoside hydrolase 4 (Arabidopsis thaliana (Mouse-ear cress)).